A 426-amino-acid polypeptide reads, in one-letter code: Enolase (426 aa).

Q163 provides a ligand contact to (2R)-2-phosphoglycerate. The Proton donor role is filled by E205. Residues D242, E286, and D313 each coordinate Mg(2+). (2R)-2-phosphoglycerate contacts are provided by K338, R367, S368, and K389. The active-site Proton acceptor is K338.

It belongs to the enolase family. It depends on Mg(2+) as a cofactor.

It is found in the cytoplasm. Its subcellular location is the secreted. The protein resides in the cell surface. The catalysed reaction is (2R)-2-phosphoglycerate = phosphoenolpyruvate + H2O. The protein operates within carbohydrate degradation; glycolysis; pyruvate from D-glyceraldehyde 3-phosphate: step 4/5. Its function is as follows. Catalyzes the reversible conversion of 2-phosphoglycerate (2-PG) into phosphoenolpyruvate (PEP). It is essential for the degradation of carbohydrates via glycolysis. This Helicobacter pylori (strain J99 / ATCC 700824) (Campylobacter pylori J99) protein is Enolase.